A 40-amino-acid chain; its full sequence is Unknown protein from spot 207 of 2D-PAGE of etiolated coleoptile (40 aa).

This sequence belongs to the GST superfamily. HSP26 family.

This chain is Unknown protein from spot 207 of 2D-PAGE of etiolated coleoptile, found in Zea mays (Maize).